Here is a 512-residue protein sequence, read N- to C-terminus: GMP synthase [glutamine-hydrolyzing] (512 aa).

Positions 7-197 constitute a Glutamine amidotransferase type-1 domain; sequence TIIVLDFGSQ…VFGVCGCSEG (191 aa). The active-site Nucleophile is the Cys-84. Active-site residues include His-171 and Glu-173. Positions 198–387 constitute a GMPS ATP-PPase domain; it reads WNMENFIEVE…LGIPDEIVWR (190 aa). 225-231 contacts ATP; sequence SGGVDSS.

Homodimer.

The catalysed reaction is XMP + L-glutamine + ATP + H2O = GMP + L-glutamate + AMP + diphosphate + 2 H(+). The protein operates within purine metabolism; GMP biosynthesis; GMP from XMP (L-Gln route): step 1/1. Catalyzes the synthesis of GMP from XMP. This chain is GMP synthase [glutamine-hydrolyzing], found in Bacillus anthracis.